We begin with the raw amino-acid sequence, 377 residues long: uncharacterized protein (377 aa).

An ATP-binding site is contributed by glycine 32–threonine 39.

It belongs to the archaeal ATPase family.

This is an uncharacterized protein from Methanocaldococcus jannaschii (strain ATCC 43067 / DSM 2661 / JAL-1 / JCM 10045 / NBRC 100440) (Methanococcus jannaschii).